The primary structure comprises 158 residues: Ribonuclease HI (158 aa).

Residues 3–144 (ELKLIHIFTD…CDQLARAAAE (142 aa)) form the RNase H type-1 domain. 4 residues coordinate Mg(2+): D12, E50, D72, and D136.

This sequence belongs to the RNase H family. In terms of assembly, monomer. The cofactor is Mg(2+).

Its subcellular location is the cytoplasm. The catalysed reaction is Endonucleolytic cleavage to 5'-phosphomonoester.. Functionally, endonuclease that specifically degrades the RNA of RNA-DNA hybrids. In Shewanella oneidensis (strain ATCC 700550 / JCM 31522 / CIP 106686 / LMG 19005 / NCIMB 14063 / MR-1), this protein is Ribonuclease HI.